Here is a 55-residue protein sequence, read N- to C-terminus: Ferredoxin (55 aa).

4Fe-4S ferredoxin-type domains follow at residues 2 to 26 (YKIT…ISEG) and 27 to 55 (SIYE…VPED). 8 residues coordinate [4Fe-4S] cluster: Cys8, Cys11, Cys14, Cys18, Cys36, Cys39, Cys42, and Cys46.

[4Fe-4S] cluster serves as cofactor.

In terms of biological role, ferredoxins are iron-sulfur proteins that transfer electrons in a wide variety of metabolic reactions. This Butyribacterium methylotrophicum protein is Ferredoxin.